The chain runs to 265 residues: Phosphatidylglycerol--prolipoprotein diacylglyceryl transferase (265 aa).

7 consecutive transmembrane segments (helical) span residues 11–31 (AVSI…FGFI), 56–76 (MVTW…ILFY), 91–111 (IWHG…AVWL), 120–140 (FLSV…FGRI), 173–193 (QLYE…WFSG), 198–218 (VGAV…AVEF), and 233–253 (WLTM…WLLL). Arg139 is a binding site for a 1,2-diacyl-sn-glycero-3-phospho-(1'-sn-glycerol).

It belongs to the Lgt family.

It is found in the cell inner membrane. The catalysed reaction is L-cysteinyl-[prolipoprotein] + a 1,2-diacyl-sn-glycero-3-phospho-(1'-sn-glycerol) = an S-1,2-diacyl-sn-glyceryl-L-cysteinyl-[prolipoprotein] + sn-glycerol 1-phosphate + H(+). It functions in the pathway protein modification; lipoprotein biosynthesis (diacylglyceryl transfer). Functionally, catalyzes the transfer of the diacylglyceryl group from phosphatidylglycerol to the sulfhydryl group of the N-terminal cysteine of a prolipoprotein, the first step in the formation of mature lipoproteins. This is Phosphatidylglycerol--prolipoprotein diacylglyceryl transferase from Nitratidesulfovibrio vulgaris (strain DSM 19637 / Miyazaki F) (Desulfovibrio vulgaris).